We begin with the raw amino-acid sequence, 289 residues long: ATP synthase gamma chain (289 aa).

This sequence belongs to the ATPase gamma chain family. In terms of assembly, F-type ATPases have 2 components, CF(1) - the catalytic core - and CF(0) - the membrane proton channel. CF(1) has five subunits: alpha(3), beta(3), gamma(1), delta(1), epsilon(1). CF(0) has three main subunits: a, b and c.

It is found in the cell inner membrane. Functionally, produces ATP from ADP in the presence of a proton gradient across the membrane. The gamma chain is believed to be important in regulating ATPase activity and the flow of protons through the CF(0) complex. The chain is ATP synthase gamma chain from Cereibacter sphaeroides (strain ATCC 17023 / DSM 158 / JCM 6121 / CCUG 31486 / LMG 2827 / NBRC 12203 / NCIMB 8253 / ATH 2.4.1.) (Rhodobacter sphaeroides).